The primary structure comprises 610 residues: Elongation factor 4 (610 aa).

One can recognise a tr-type G domain in the interval 11–193 (EKIRNFSIIA…QIVEKVPAPT (183 aa)). GTP-binding positions include 23–28 (DHGKST) and 140–143 (NKID).

The protein belongs to the TRAFAC class translation factor GTPase superfamily. Classic translation factor GTPase family. LepA subfamily.

The protein localises to the cell membrane. The catalysed reaction is GTP + H2O = GDP + phosphate + H(+). Required for accurate and efficient protein synthesis under certain stress conditions. May act as a fidelity factor of the translation reaction, by catalyzing a one-codon backward translocation of tRNAs on improperly translocated ribosomes. Back-translocation proceeds from a post-translocation (POST) complex to a pre-translocation (PRE) complex, thus giving elongation factor G a second chance to translocate the tRNAs correctly. Binds to ribosomes in a GTP-dependent manner. This Streptococcus pyogenes serotype M1 protein is Elongation factor 4.